The sequence spans 101 residues: Chaperone modulatory protein CbpM (101 aa).

It belongs to the CbpM family.

Interacts with CbpA and inhibits both the DnaJ-like co-chaperone activity and the DNA binding activity of CbpA. Together with CbpA, modulates the activity of the DnaK chaperone system. Does not inhibit the co-chaperone activity of DnaJ. This is Chaperone modulatory protein CbpM from Salmonella agona (strain SL483).